The sequence spans 311 residues: Long form salivary protein D7L1 (311 aa).

An N-terminal signal peptide occupies residues 1-21 (MIVTGVLLFILLELFAQGSQA). 4 cysteine pairs are disulfide-bonded: C37-C73, C69-C128, C178-C211, and C252-C263.

This sequence belongs to the PBP/GOBP family.

It localises to the secreted. Functionally, modulates blood feeding of female mosquitoes on vertebrate species by binding and sequestering different mediators involved in the host response. Binds leukotriene C4 and U-46619, a stable analog of thromboxane A2. Inhibits agonist-induced platelet aggregation. Exhibits vasodilating activity. The protein is Long form salivary protein D7L1 of Anopheles gambiae (African malaria mosquito).